A 200-amino-acid chain; its full sequence is 3-isopropylmalate dehydratase small subunit (200 aa).

Belongs to the LeuD family. LeuD type 1 subfamily. As to quaternary structure, heterodimer of LeuC and LeuD.

It catalyses the reaction (2R,3S)-3-isopropylmalate = (2S)-2-isopropylmalate. Its pathway is amino-acid biosynthesis; L-leucine biosynthesis; L-leucine from 3-methyl-2-oxobutanoate: step 2/4. Its function is as follows. Catalyzes the isomerization between 2-isopropylmalate and 3-isopropylmalate, via the formation of 2-isopropylmaleate. The chain is 3-isopropylmalate dehydratase small subunit from Actinobacillus succinogenes (strain ATCC 55618 / DSM 22257 / CCUG 43843 / 130Z).